Reading from the N-terminus, the 142-residue chain is Large ribosomal subunit protein uL13 (142 aa).

The protein belongs to the universal ribosomal protein uL13 family. As to quaternary structure, part of the 50S ribosomal subunit.

This protein is one of the early assembly proteins of the 50S ribosomal subunit, although it is not seen to bind rRNA by itself. It is important during the early stages of 50S assembly. The sequence is that of Large ribosomal subunit protein uL13 from Proteus mirabilis (strain HI4320).